Here is a 394-residue protein sequence, read N- to C-terminus: Succinate--CoA ligase [ADP-forming] subunit beta 1 (394 aa).

Residues 9–237 (RDLFAKHDVP…KAAANPLEAA (229 aa)) form the ATP-grasp domain. ATP is bound by residues K45, 52–54 (GRG), E92, P95, and E100. The Mg(2+) site is built by N192 and D206. Substrate contacts are provided by residues N257 and 319–321 (GIT).

It belongs to the succinate/malate CoA ligase beta subunit family. Heterotetramer of two alpha and two beta subunits. Requires Mg(2+) as cofactor.

The enzyme catalyses succinate + ATP + CoA = succinyl-CoA + ADP + phosphate. It carries out the reaction GTP + succinate + CoA = succinyl-CoA + GDP + phosphate. It participates in carbohydrate metabolism; tricarboxylic acid cycle; succinate from succinyl-CoA (ligase route): step 1/1. Succinyl-CoA synthetase functions in the citric acid cycle (TCA), coupling the hydrolysis of succinyl-CoA to the synthesis of either ATP or GTP and thus represents the only step of substrate-level phosphorylation in the TCA. The beta subunit provides nucleotide specificity of the enzyme and binds the substrate succinate, while the binding sites for coenzyme A and phosphate are found in the alpha subunit. In Streptomyces coelicolor (strain ATCC BAA-471 / A3(2) / M145), this protein is Succinate--CoA ligase [ADP-forming] subunit beta 1.